The primary structure comprises 131 residues: Small ribosomal subunit protein uS8 (131 aa).

This sequence belongs to the universal ribosomal protein uS8 family. As to quaternary structure, part of the 30S ribosomal subunit. Contacts proteins S5 and S12.

In terms of biological role, one of the primary rRNA binding proteins, it binds directly to 16S rRNA central domain where it helps coordinate assembly of the platform of the 30S subunit. In Prosthecochloris aestuarii (strain DSM 271 / SK 413), this protein is Small ribosomal subunit protein uS8.